The sequence spans 494 residues: Autocrine proliferation repressor protein A (494 aa).

A signal peptide spans 1–18; the sequence is MSKLLILLLLSLVASIFS. 3 N-linked (GlcNAc...) asparagine glycosylation sites follow: asparagine 37, asparagine 153, and asparagine 302.

Belongs to the pqaA family. Interacts with cfaD.

It is found in the secreted. Inhibitor that slows proliferation of secreting cells (also known as chalone). May function by binding to cell surface receptors. Requires cfaD for activity. Overexpression slows proliferation. The sequence is that of Autocrine proliferation repressor protein A (aprA) from Dictyostelium discoideum (Social amoeba).